Reading from the N-terminus, the 293-residue chain is Ribosomal protein L11 methyltransferase (293 aa).

S-adenosyl-L-methionine contacts are provided by Thr145, Gly166, Asp188, and Asn230.

It belongs to the methyltransferase superfamily. PrmA family.

It localises to the cytoplasm. It catalyses the reaction L-lysyl-[protein] + 3 S-adenosyl-L-methionine = N(6),N(6),N(6)-trimethyl-L-lysyl-[protein] + 3 S-adenosyl-L-homocysteine + 3 H(+). Its function is as follows. Methylates ribosomal protein L11. This chain is Ribosomal protein L11 methyltransferase, found in Yersinia pseudotuberculosis serotype I (strain IP32953).